The sequence spans 253 residues: uncharacterized protein (253 aa).

The signal sequence occupies residues 1–16; that stretch reads MCVVYRTSVLILLASG. C17 carries the N-palmitoyl cysteine lipid modification. C17 carries the S-diacylglycerol cysteine lipid modification.

The protein belongs to the staphylococcal tandem lipoprotein family.

It localises to the cell membrane. This is an uncharacterized protein from Staphylococcus aureus (strain N315).